The sequence spans 201 residues: 3-isopropylmalate dehydratase small subunit (201 aa).

Belongs to the LeuD family. LeuD type 1 subfamily. As to quaternary structure, heterodimer of LeuC and LeuD.

It catalyses the reaction (2R,3S)-3-isopropylmalate = (2S)-2-isopropylmalate. It functions in the pathway amino-acid biosynthesis; L-leucine biosynthesis; L-leucine from 3-methyl-2-oxobutanoate: step 2/4. Its function is as follows. Catalyzes the isomerization between 2-isopropylmalate and 3-isopropylmalate, via the formation of 2-isopropylmaleate. This is 3-isopropylmalate dehydratase small subunit from Ruegeria sp. (strain TM1040) (Silicibacter sp.).